Consider the following 101-residue polypeptide: Iron-sulfur cluster assembly protein CyaY (101 aa).

It belongs to the frataxin family.

In terms of biological role, involved in iron-sulfur (Fe-S) cluster assembly. May act as a regulator of Fe-S biogenesis. The chain is Iron-sulfur cluster assembly protein CyaY from Actinobacillus pleuropneumoniae serotype 7 (strain AP76).